The primary structure comprises 373 residues: Forkhead box protein E1 (373 aa).

The segment at 19-51 is disordered; the sequence is KEERGETAAGAGVPGEATGRGAGGRRRKRPLQR. A compositionally biased stretch (basic residues) spans 41-50; sequence GGRRRKRPLQ. The segment at residues 53–147 is a DNA-binding region (fork-head); that stretch reads KPPYSYIALI…ESGSFLRRRK (95 aa).

Post-translationally, phosphorylated. Detected in adult brain, placenta, lung, liver, skeletal muscle, kidney, pancreas, heart, colon, small intestine testis and thymus. Expression was strongest in heart and pancreas.

The protein localises to the nucleus. Functionally, transcription factor that binds consensus sites on a variety of gene promoters and activate their transcription. Involved in proper palate formation, most probably through the expression of MSX1 and TGFB3 genes which are direct targets of this transcription factor. Also implicated in thyroid gland morphogenesis. May indirectly play a role in cell growth and migration through the regulation of WNT5A expression. The chain is Forkhead box protein E1 (FOXE1) from Homo sapiens (Human).